Here is a 463-residue protein sequence, read N- to C-terminus: tRNA-2-methylthio-N(6)-dimethylallyladenosine synthase (463 aa).

Residues 19 to 135 (RSYWITTFGC…LENLLGKVDL (117 aa)) enclose the MTTase N-terminal domain. Residues C28, C64, C98, C170, C174, and C177 each coordinate [4Fe-4S] cluster. Positions 156-393 (RESSICGWVN…NALVEKTARN (238 aa)) constitute a Radical SAM core domain. Residues 396-463 (QRYINNIESV…RPFSLTGELC (68 aa)) enclose the TRAM domain.

Belongs to the methylthiotransferase family. MiaB subfamily. As to quaternary structure, monomer. The cofactor is [4Fe-4S] cluster.

Its subcellular location is the cytoplasm. The catalysed reaction is N(6)-dimethylallyladenosine(37) in tRNA + (sulfur carrier)-SH + AH2 + 2 S-adenosyl-L-methionine = 2-methylsulfanyl-N(6)-dimethylallyladenosine(37) in tRNA + (sulfur carrier)-H + 5'-deoxyadenosine + L-methionine + A + S-adenosyl-L-homocysteine + 2 H(+). Functionally, catalyzes the methylthiolation of N6-(dimethylallyl)adenosine (i(6)A), leading to the formation of 2-methylthio-N6-(dimethylallyl)adenosine (ms(2)i(6)A) at position 37 in tRNAs that read codons beginning with uridine. The sequence is that of tRNA-2-methylthio-N(6)-dimethylallyladenosine synthase from Prochlorococcus marinus (strain MIT 9312).